The chain runs to 956 residues: MTNNNLLAQLNDNLDFISRHNGPDRTQQQHMLDTLKVDSIEQMIDKTVPDNIRLLQPMALAKPQSEIEMLATLKGIASKNKVNRSYIGQGYYDTHVPHVILRNVFENPGWYTAYTPYQPEISQGRLEALLNFQQMITDLTAMELSNASLLDEATAAAEAMSLCKRASKNKSNVFFVSDDVHPQTLDVINTRAKYFSFEVVVAPCSELENHDVFGALLQYPGTTGQVHNLEKIIEQAHSKKTLVAVAADLLALTVLKAPGEMGADVVIGSAQRFGVPMGYGGPHAAFMATKEKYKRTIPGRVIGVSIDSKGKPALRMAMQTREQHIRREKANSNICTAQALLANMASFYAVYHGPQGLRKMGRRVNRLTSVLAAGLQKAGIELVHNDFFDTITLQTNEKTDAIYQRALAADLNLRLLPDQLGISLDETTTSADVEALWLAITEQSFNVDDIEQTLSAEFCNIPADCQRTSEYLSHPVFNSYHSETRMLRYLKSLENKDFSLTHGMIPLGSCTMKLNATAQMIPVTWPEFSRMHPFAPSDQCTGYETLAESFSDMLIEITGYDAFSLQPNSGAQGEYAGLIAIQRYHASRGEDYRNICLIPSSAHGTNPASASMVSMRIVLVNCDKEGNVDLDDLKEKINLHRDQLSAMMITYPSTHGVYEESIKEICELIHEAGGQVYLDGANMNAQVGLTSPGFIGADVSHLNLHKTFCIPHGGGGPGMGPIGVKSHLADFLPGHSVTNTVGAVSATALGSASILPISWAYIALMGAEGLKSATELAILNANYIMEKLSPHYPILFRGKQGRVAHECIIDLRPLKESSGISEEDVAKRLMDFGFHAPTMSFPVAGTLMIEPTESESLEELDKFIDALITIRHEIAKVEEGTWTLADNPLVNAPHTLNDLTGSDWPRAYSRLTACYPSSCPSQPKFWPTTNRIDNVYGDRNLICSCPPIESYQSTDT.

At Lys-706 the chain carries N6-(pyridoxal phosphate)lysine.

This sequence belongs to the GcvP family. The glycine cleavage system is composed of four proteins: P, T, L and H. It depends on pyridoxal 5'-phosphate as a cofactor.

It catalyses the reaction N(6)-[(R)-lipoyl]-L-lysyl-[glycine-cleavage complex H protein] + glycine + H(+) = N(6)-[(R)-S(8)-aminomethyldihydrolipoyl]-L-lysyl-[glycine-cleavage complex H protein] + CO2. The glycine cleavage system catalyzes the degradation of glycine. The P protein binds the alpha-amino group of glycine through its pyridoxal phosphate cofactor; CO(2) is released and the remaining methylamine moiety is then transferred to the lipoamide cofactor of the H protein. The protein is Glycine dehydrogenase (decarboxylating) 2 of Colwellia psychrerythraea (strain 34H / ATCC BAA-681) (Vibrio psychroerythus).